The primary structure comprises 1644 residues: Terminal uridylyltransferase 4 (1644 aa).

Disordered regions lie at residues 31–63 (NQTL…QNDI), 96–168 (CKAK…SLLL), and 205–257 (ALQN…EMDY). Positions 36-46 (ARNDKSVKEIE) are enriched in basic and acidic residues. The residue at position 104 (Ser-104) is a Phosphoserine. A compositionally biased stretch (polar residues) spans 112–125 (TISQAKSEKATSLQ). Phosphoserine is present on residues Ser-134 and Ser-156. Positions 206–222 (LQNSPRSQKQQTCTDNT) are enriched in polar residues. Residues 238–252 (DLSKMKNDESNKENS) show a composition bias toward basic and acidic residues. The tract at residues 253-333 (SEMDYLENAT…KEKRHKKNIL (81 aa)) is required for interaction with LIN28A and pre-let-7 RNA. The Zn(2+) site is built by Cys-306, Cys-309, His-322, and His-328. Positions 579-617 (EKNSIAEENKAKADQPKDDTKKTETDNQSNAMKEKHGKS) are disordered. The segment covering 582–603 (SIAEENKAKADQPKDDTKKTET) has biased composition (basic and acidic residues). The PAP-associated 1 domain maps to 628 to 678 (SLGQLWLELLKFYTLDFALEEYVICVRIQDILTRENKNWPKRRIAIEDPFS). The tract at residues 794–816 (GQDSSSLSTSKSSEIEPKLDKKQ) is disordered. A compositionally biased stretch (basic and acidic residues) spans 806–816 (SEIEPKLDKKQ). The interval 901–1634 (DKFILTSGKP…CATRRCRERC (734 aa)) is sufficient for monouridylation activity. A CCHC-type 1 zinc finger spans residues 913–930 (IVCSICKKDGHSKNDCPE). UTP contacts are provided by residues 998-1001 (SSKN), 1008-1011 (SDLD), Asn-1081, Lys-1103, 1121-1125 (SYAYI), and His-1237. Mg(2+) contacts are provided by Asp-1009 and Asp-1011. Positions 1184-1237 (SLGELWLGLLRFYTEEFDFKEYVISIRQKKLLTTFEKQWTSKCIAIEDPFDLNH) constitute a PAP-associated 2 domain. Residues 1293–1310 (RCCRVCGKIGHYMKDCPK) form a CCHC-type 2 zinc finger. Residues 1321-1348 (KDSEEEKEGNEEEKDSRDVLDPRDLHDT) are disordered. The span at 1334–1348 (KDSRDVLDPRDLHDT) shows a compositional bias: basic and acidic residues. Residues 1357-1374 (LRCFICGDAGHVRRECPE) form a CCHC-type 3 zinc finger. Residues 1401 to 1426 (AGSAQQQGDQSIRTRQSSECSESPSY) show a composition bias toward low complexity. Residues 1401–1482 (AGSAQQQGDQ…LYNFPQSPPA (82 aa)) are disordered. The segment covering 1441 to 1452 (AAITQPSSQPGS) has biased composition (polar residues). Residues 1453–1470 (QPKLGPPQQGAQPPHQVQ) show a composition bias toward low complexity. Arg-1624 carries the post-translational modification Omega-N-methylarginine.

The protein belongs to the DNA polymerase type-B-like family. Interacts with LIN28A in the presence of pre-let-7 RNA. Interacts with T2BP. Interacts with MOV10; the interaction is RNA-dependent. Requires Mg(2+) as cofactor. Mn(2+) serves as cofactor.

The protein localises to the nucleus. The protein resides in the cytoplasm. It is found in the cytoplasmic ribonucleoprotein granule. It carries out the reaction RNA(n) + UTP = RNA(n)-3'-uridine ribonucleotide + diphosphate. Its function is as follows. Uridylyltransferase that mediates the terminal uridylation of mRNAs with short (less than 25 nucleotides) poly(A) tails, hence facilitating global mRNA decay. Essential for both oocyte maturation and fertility. Through 3' terminal uridylation of mRNA, sculpts, with TUT7, the maternal transcriptome by eliminating transcripts during oocyte growth. Involved in microRNA (miRNA)-induced gene silencing through uridylation of deadenylated miRNA targets. Also functions as an integral regulator of microRNA biogenesis using 3 different uridylation mechanisms. Acts as a suppressor of miRNA biogenesis by mediating the terminal uridylation of some miRNA precursors, including that of let-7 (pre-let-7), miR107, miR-143 and miR-200c. Uridylated miRNAs are not processed by Dicer and undergo degradation. Degradation of pre-let-7 contributes to the maintenance of embryonic stem (ES) cell pluripotency. Also catalyzes the 3' uridylation of miR-26A, a miRNA that targets IL6 transcript. This abrogates the silencing of IL6 transcript, hence promoting cytokine expression. In the absence of LIN28A, TUT7 and TUT4 monouridylate group II pre-miRNAs, which includes most of pre-let7 members, that shapes an optimal 3' end overhang for efficient processing. Adds oligo-U tails to truncated pre-miRNAS with a 5' overhang which may promote rapid degradation of non-functional pre-miRNA species. May also suppress Toll-like receptor-induced NF-kappa-B activation via binding to T2BP. Does not play a role in replication-dependent histone mRNA degradation. Due to functional redundancy between TUT4 and TUT7, the identification of the specific role of each of these proteins is difficult. TUT4 and TUT7 restrict retrotransposition of long interspersed element-1 (LINE-1) in cooperation with MOV10 counteracting the RNA chaperonne activity of L1RE1. TUT7 uridylates LINE-1 mRNAs in the cytoplasm which inhibits initiation of reverse transcription once in the nucleus, whereas uridylation by TUT4 destabilizes mRNAs in cytoplasmic ribonucleoprotein granules. This chain is Terminal uridylyltransferase 4, found in Homo sapiens (Human).